The sequence spans 371 residues: tRNA/tmRNA (uracil-C(5))-methyltransferase (371 aa).

S-adenosyl-L-methionine contacts are provided by glutamine 194, tyrosine 223, asparagine 228, glutamate 244, and aspartate 304. Residue cysteine 329 is the Nucleophile of the active site. Catalysis depends on glutamate 363, which acts as the Proton acceptor.

It belongs to the class I-like SAM-binding methyltransferase superfamily. RNA M5U methyltransferase family. TrmA subfamily.

It catalyses the reaction uridine(54) in tRNA + S-adenosyl-L-methionine = 5-methyluridine(54) in tRNA + S-adenosyl-L-homocysteine + H(+). The catalysed reaction is uridine(341) in tmRNA + S-adenosyl-L-methionine = 5-methyluridine(341) in tmRNA + S-adenosyl-L-homocysteine + H(+). Functionally, dual-specificity methyltransferase that catalyzes the formation of 5-methyluridine at position 54 (m5U54) in all tRNAs, and that of position 341 (m5U341) in tmRNA (transfer-mRNA). The chain is tRNA/tmRNA (uracil-C(5))-methyltransferase from Sulfurovum sp. (strain NBC37-1).